Here is an 881-residue protein sequence, read N- to C-terminus: Valine--tRNA ligase (881 aa).

The short motif at 49 to 59 (PNVTGKLHLGH) is the 'HIGH' region element. The 'KMSKS' region motif lies at 526–530 (KMSKS). Residue Lys-529 coordinates ATP. The stretch at 810–881 (LADLINLDEE…VRQRLADLEK (72 aa)) forms a coiled coil.

This sequence belongs to the class-I aminoacyl-tRNA synthetase family. ValS type 1 subfamily. As to quaternary structure, monomer.

It is found in the cytoplasm. It carries out the reaction tRNA(Val) + L-valine + ATP = L-valyl-tRNA(Val) + AMP + diphosphate. Functionally, catalyzes the attachment of valine to tRNA(Val). As ValRS can inadvertently accommodate and process structurally similar amino acids such as threonine, to avoid such errors, it has a 'posttransfer' editing activity that hydrolyzes mischarged Thr-tRNA(Val) in a tRNA-dependent manner. In Bacillus thuringiensis subsp. konkukian (strain 97-27), this protein is Valine--tRNA ligase.